Reading from the N-terminus, the 155-residue chain is Ribonuclease H (155 aa).

Positions 4 to 145 (NISKVVIYTD…ADKLAAQGRQ (142 aa)) constitute an RNase H type-1 domain. Residues aspartate 13, glutamate 51, aspartate 73, and aspartate 137 each contribute to the Mg(2+) site.

This sequence belongs to the RNase H family. As to quaternary structure, monomer. It depends on Mg(2+) as a cofactor.

The protein localises to the cytoplasm. The enzyme catalyses Endonucleolytic cleavage to 5'-phosphomonoester.. Functionally, endonuclease that specifically degrades the RNA of RNA-DNA hybrids. This chain is Ribonuclease H, found in Rickettsia canadensis (strain McKiel).